The sequence spans 380 residues: Chorismate synthase (380 aa).

Arg49 contributes to the NADP(+) binding site. FMN is bound by residues Gly288, 303-307, and Arg330; that span reads KPPSS.

Belongs to the chorismate synthase family. It depends on FMNH2 as a cofactor.

The catalysed reaction is 5-O-(1-carboxyvinyl)-3-phosphoshikimate = chorismate + phosphate. It functions in the pathway metabolic intermediate biosynthesis; chorismate biosynthesis; chorismate from D-erythrose 4-phosphate and phosphoenolpyruvate: step 7/7. Its function is as follows. Catalyzes the anti-1,4-elimination of the C-3 phosphate and the C-6 proR hydrogen from 5-enolpyruvylshikimate-3-phosphate (EPSP) to yield chorismate, which is the branch point compound that serves as the starting substrate for the three terminal pathways of aromatic amino acid biosynthesis. This reaction introduces a second double bond into the aromatic ring system. This chain is Chorismate synthase, found in Aeropyrum pernix (strain ATCC 700893 / DSM 11879 / JCM 9820 / NBRC 100138 / K1).